Consider the following 120-residue polypeptide: NAD(P)H-quinone oxidoreductase subunit 3, chloroplastic (120 aa).

3 helical membrane-spanning segments follow: residues 9-29, 64-84, and 88-108; these read IFWT…WISG, MFAL…PWAM, and VLGV…VVGL.

The protein belongs to the complex I subunit 3 family. NDH is composed of at least 16 different subunits, 5 of which are encoded in the nucleus.

Its subcellular location is the plastid. The protein localises to the chloroplast thylakoid membrane. It catalyses the reaction a plastoquinone + NADH + (n+1) H(+)(in) = a plastoquinol + NAD(+) + n H(+)(out). It carries out the reaction a plastoquinone + NADPH + (n+1) H(+)(in) = a plastoquinol + NADP(+) + n H(+)(out). NDH shuttles electrons from NAD(P)H:plastoquinone, via FMN and iron-sulfur (Fe-S) centers, to quinones in the photosynthetic chain and possibly in a chloroplast respiratory chain. The immediate electron acceptor for the enzyme in this species is believed to be plastoquinone. Couples the redox reaction to proton translocation, and thus conserves the redox energy in a proton gradient. In Brachypodium distachyon (Purple false brome), this protein is NAD(P)H-quinone oxidoreductase subunit 3, chloroplastic.